Reading from the N-terminus, the 640-residue chain is 1-deoxy-D-xylulose-5-phosphate synthase (640 aa).

Thiamine diphosphate-binding positions include histidine 75 and 117 to 119 (GHA). Residue aspartate 146 coordinates Mg(2+). Thiamine diphosphate is bound by residues 147–148 (AA), asparagine 175, and glutamate 370. Asparagine 175 lines the Mg(2+) pocket.

Belongs to the transketolase family. DXPS subfamily. As to quaternary structure, homodimer. Mg(2+) is required as a cofactor. It depends on thiamine diphosphate as a cofactor.

It carries out the reaction D-glyceraldehyde 3-phosphate + pyruvate + H(+) = 1-deoxy-D-xylulose 5-phosphate + CO2. Its pathway is metabolic intermediate biosynthesis; 1-deoxy-D-xylulose 5-phosphate biosynthesis; 1-deoxy-D-xylulose 5-phosphate from D-glyceraldehyde 3-phosphate and pyruvate: step 1/1. Catalyzes the acyloin condensation reaction between C atoms 2 and 3 of pyruvate and glyceraldehyde 3-phosphate to yield 1-deoxy-D-xylulose-5-phosphate (DXP). The protein is 1-deoxy-D-xylulose-5-phosphate synthase of Chlamydia trachomatis serovar A (strain ATCC VR-571B / DSM 19440 / HAR-13).